The primary structure comprises 601 residues: Glutathione-regulated potassium-efflux system protein KefB (601 aa).

13 helical membrane passes run 4 to 24 (SDFL…VPLA), 29 to 49 (IGAV…GLGF), 55 to 75 (EILH…GLEL), 87 to 107 (IFGV…GLLM), 115 to 135 (AAVV…LQLM), 152 to 172 (VLLF…LLAG), 177 to 197 (HFDW…LIGG), 207 to 227 (FIAA…LVLG), 230 to 250 (LFMD…GVLL), 268 to 288 (GLLL…GVLY), 291 to 311 (LLWV…VLYL), 324 to 344 (MQFA…FSTA), and 356 to 376 (ALLL…MKLV). The RCK N-terminal domain occupies 400 to 519 (KPQVIVVGFG…AGVTQFSRET (120 aa)).

This sequence belongs to the monovalent cation:proton antiporter 2 (CPA2) transporter (TC 2.A.37) family. KefB subfamily. Interacts with the regulatory subunit KefG.

Its subcellular location is the cell inner membrane. Pore-forming subunit of a potassium efflux system that confers protection against electrophiles. Catalyzes K(+)/H(+) antiport. In Escherichia coli O17:K52:H18 (strain UMN026 / ExPEC), this protein is Glutathione-regulated potassium-efflux system protein KefB.